A 25-amino-acid chain; its full sequence is Chlorocatechol 1,2-dioxygenase 1 (25 aa).

This sequence belongs to the intradiol ring-cleavage dioxygenase family. Requires Fe(3+) as cofactor.

It carries out the reaction 3,5-dichlorocatechol + O2 = (2E,4E)-2,4-dichloromuconate + 2 H(+). It participates in xenobiotic degradation; 2-(2,4-dichlorophenoxy)propanoate degradation. This is Chlorocatechol 1,2-dioxygenase 1 (tfdC) from Delftia acidovorans (Pseudomonas acidovorans).